Here is a 97-residue protein sequence, read N- to C-terminus: Large ribosomal subunit protein bL28 (97 aa).

It belongs to the bacterial ribosomal protein bL28 family.

The polypeptide is Large ribosomal subunit protein bL28 (Rickettsia rickettsii (strain Iowa)).